A 393-amino-acid polypeptide reads, in one-letter code: NADH-quinone oxidoreductase subunit D (393 aa).

The protein belongs to the complex I 49 kDa subunit family. As to quaternary structure, NDH-1 is composed of 14 different subunits. Subunits NuoB, C, D, E, F, and G constitute the peripheral sector of the complex.

The protein localises to the cell inner membrane. It catalyses the reaction a quinone + NADH + 5 H(+)(in) = a quinol + NAD(+) + 4 H(+)(out). In terms of biological role, NDH-1 shuttles electrons from NADH, via FMN and iron-sulfur (Fe-S) centers, to quinones in the respiratory chain. The immediate electron acceptor for the enzyme in this species is believed to be ubiquinone. Couples the redox reaction to proton translocation (for every two electrons transferred, four hydrogen ions are translocated across the cytoplasmic membrane), and thus conserves the redox energy in a proton gradient. This chain is NADH-quinone oxidoreductase subunit D, found in Ehrlichia ruminantium (strain Welgevonden).